The primary structure comprises 891 residues: Alanine--tRNA ligase (891 aa).

Zn(2+)-binding residues include His-576, His-580, Cys-684, and His-688.

The protein belongs to the class-II aminoacyl-tRNA synthetase family. Zn(2+) serves as cofactor.

The protein resides in the cytoplasm. It catalyses the reaction tRNA(Ala) + L-alanine + ATP = L-alanyl-tRNA(Ala) + AMP + diphosphate. Its function is as follows. Catalyzes the attachment of alanine to tRNA(Ala) in a two-step reaction: alanine is first activated by ATP to form Ala-AMP and then transferred to the acceptor end of tRNA(Ala). Also edits incorrectly charged Ser-tRNA(Ala) and Gly-tRNA(Ala) via its editing domain. This Orientia tsutsugamushi (strain Boryong) (Rickettsia tsutsugamushi) protein is Alanine--tRNA ligase.